Here is a 384-residue protein sequence, read N- to C-terminus: CDP-diacylglycerol--serine O-phosphatidyltransferase (384 aa).

It belongs to the CDP-alcohol phosphatidyltransferase class-I family.

It localises to the membrane. It carries out the reaction a CDP-1,2-diacyl-sn-glycerol + L-serine = a 1,2-diacyl-sn-glycero-3-phospho-L-serine + CMP + H(+). It functions in the pathway phospholipid metabolism; phosphatidylethanolamine biosynthesis; phosphatidylethanolamine from CDP-diacylglycerol: step 1/2. The protein is CDP-diacylglycerol--serine O-phosphatidyltransferase (PSS) of Encephalitozoon cuniculi (strain GB-M1) (Microsporidian parasite).